We begin with the raw amino-acid sequence, 227 residues long: 7-cyano-7-deazaguanine synthase (227 aa).

Residue 7–17 (LSGGMDSLVTT) participates in ATP binding. Zn(2+) contacts are provided by Cys187, Cys195, Cys198, and Cys201.

Belongs to the QueC family. Zn(2+) serves as cofactor.

It carries out the reaction 7-carboxy-7-deazaguanine + NH4(+) + ATP = 7-cyano-7-deazaguanine + ADP + phosphate + H2O + H(+). The protein operates within purine metabolism; 7-cyano-7-deazaguanine biosynthesis. Functionally, catalyzes the ATP-dependent conversion of 7-carboxy-7-deazaguanine (CDG) to 7-cyano-7-deazaguanine (preQ(0)). This chain is 7-cyano-7-deazaguanine synthase, found in Chlorobium phaeovibrioides (strain DSM 265 / 1930) (Prosthecochloris vibrioformis (strain DSM 265)).